Here is a 163-residue protein sequence, read N- to C-terminus: Nucleotide-binding protein PMI0103 (163 aa).

Belongs to the YajQ family.

In terms of biological role, nucleotide-binding protein. In Proteus mirabilis (strain HI4320), this protein is Nucleotide-binding protein PMI0103.